The primary structure comprises 579 residues: Insulin-like growth factor 2 mRNA-binding protein 3 (579 aa).

RRM domains lie at 2-75 (NKLY…HSVP) and 81-156 (RKLQ…YIPD). The disordered stretch occupies residues 160–192 (AQQNPLQQPRGRRGLGQRGSSRQGSPGSVSKQK). Residues 177 to 187 (RGSSRQGSPGS) show a composition bias toward low complexity. Serine 184 is subject to Phosphoserine. KH domains lie at 195–260 (DLPL…CKSI), 276–343 (EIPL…EEEI), and 405–470 (TETV…QGRI). Glycyl lysine isopeptide (Lys-Gly) (interchain with G-Cter in SUMO2) cross-links involve residues lysine 450 and lysine 475. Positions 487 to 553 (KLEAHIRVPS…YACQVAQRKI (67 aa)) constitute a KH 4 domain. Phosphothreonine is present on threonine 528.

The protein belongs to the RRM IMP/VICKZ family. As to quaternary structure, can form homooligomers and heterooligomers with IGF2BP1 and IGF2BP3 in an RNA-dependent manner. Interacts with IGF2BP1. Interacts with ELAVL1, DHX9, HNRNPU, MATR3 and PABPC1. As to expression, expressed in fetal liver, fetal lung, fetal kidney, fetal thymus, fetal placenta, fetal follicles of ovary and gonocytes of testis, growing oocytes, spermatogonia and semen (at protein level). Expressed in cervix adenocarcinoma, in testicular, pancreatic and renal-cell carcinomas (at protein level). Expressed ubiquitously during fetal development at 8 and 14 weeks of gestation. Expressed in ovary, testis, brain, placenta, pancreatic cancer tissues and pancreatic cancer cell lines.

Its subcellular location is the nucleus. The protein localises to the cytoplasm. It localises to the P-body. The protein resides in the stress granule. In terms of biological role, RNA-binding factor that may recruit target transcripts to cytoplasmic protein-RNA complexes (mRNPs). This transcript 'caging' into mRNPs allows mRNA transport and transient storage. It also modulates the rate and location at which target transcripts encounter the translational apparatus and shields them from endonuclease attacks or microRNA-mediated degradation. Preferentially binds to N6-methyladenosine (m6A)-containing mRNAs and increases their stability. Binds to the 3'-UTR of CD44 mRNA and stabilizes it, hence promotes cell adhesion and invadopodia formation in cancer cells. Binds to beta-actin/ACTB and MYC transcripts. Increases MYC mRNA stability by binding to the coding region instability determinant (CRD) and binding is enhanced by m6A-modification of the CRD. Binds to the 5'-UTR of the insulin-like growth factor 2 (IGF2) mRNAs. The polypeptide is Insulin-like growth factor 2 mRNA-binding protein 3 (IGF2BP3) (Homo sapiens (Human)).